Consider the following 224-residue polypeptide: Prophage repressor CohE (224 aa).

This Escherichia coli (strain K12) protein is Prophage repressor CohE (cohE).